The primary structure comprises 435 residues: Adenylosuccinate synthetase (435 aa).

Residues 22-28 (GDEGKGK) and 50-52 (GHT) each bind GTP. Aspartate 23 serves as the catalytic Proton acceptor. Mg(2+) contacts are provided by aspartate 23 and glycine 50. IMP contacts are provided by residues 23-26 (DEGK), 48-51 (NAGH), threonine 140, arginine 154, glutamine 235, threonine 250, and arginine 314. Histidine 51 acts as the Proton donor in catalysis. Position 310–316 (310–316 (ATTGRKR)) interacts with substrate. GTP-binding positions include arginine 316, 342 to 344 (KLD), and 424 to 426 (SVG).

It belongs to the adenylosuccinate synthetase family. In terms of assembly, homodimer. Mg(2+) is required as a cofactor.

Its subcellular location is the cytoplasm. The catalysed reaction is IMP + L-aspartate + GTP = N(6)-(1,2-dicarboxyethyl)-AMP + GDP + phosphate + 2 H(+). It functions in the pathway purine metabolism; AMP biosynthesis via de novo pathway; AMP from IMP: step 1/2. Plays an important role in the de novo pathway of purine nucleotide biosynthesis. Catalyzes the first committed step in the biosynthesis of AMP from IMP. This is Adenylosuccinate synthetase from Chlorobaculum parvum (strain DSM 263 / NCIMB 8327) (Chlorobium vibrioforme subsp. thiosulfatophilum).